A 244-amino-acid polypeptide reads, in one-letter code: 1-(5-phosphoribosyl)-5-[(5-phosphoribosylamino)methylideneamino] imidazole-4-carboxamide isomerase (244 aa).

The Proton acceptor role is filled by aspartate 12. The active-site Proton donor is aspartate 131.

It belongs to the HisA/HisF family.

It localises to the cytoplasm. It carries out the reaction 1-(5-phospho-beta-D-ribosyl)-5-[(5-phospho-beta-D-ribosylamino)methylideneamino]imidazole-4-carboxamide = 5-[(5-phospho-1-deoxy-D-ribulos-1-ylimino)methylamino]-1-(5-phospho-beta-D-ribosyl)imidazole-4-carboxamide. The protein operates within amino-acid biosynthesis; L-histidine biosynthesis; L-histidine from 5-phospho-alpha-D-ribose 1-diphosphate: step 4/9. In Nocardioides sp. (strain ATCC BAA-499 / JS614), this protein is 1-(5-phosphoribosyl)-5-[(5-phosphoribosylamino)methylideneamino] imidazole-4-carboxamide isomerase.